We begin with the raw amino-acid sequence, 312 residues long: Cathepsin O (312 aa).

The N-terminal stretch at 1–23 (MKPQLVNLLLLCCCCLGRHGVAG) is a signal peptide. Positions 24 to 98 (TWSWSHQREA…EGQRPIPNVS (75 aa)) are cleaved as a propeptide — activation peptide. N53 and N96 each carry an N-linked (GlcNAc...) asparagine glycan. Disulfide bonds link C120–C161, C154–C195, and C253–C301. Residue C123 is part of the active site. Catalysis depends on residues H260 and N280.

This sequence belongs to the peptidase C1 family.

The protein resides in the lysosome. The catalysed reaction is The recombinant human enzyme hydrolyzes synthetic endopeptidase substrates including Z-Phe-Arg-NHMec and Z-Arg-Arg-NHMec.. Proteolytic enzyme possibly involved in normal cellular protein degradation and turnover. The sequence is that of Cathepsin O (Ctso) from Mus musculus (Mouse).